Consider the following 130-residue polypeptide: MAKLSTDDLLDAFKEMTLLELSEFVKQFEETFDVTAAAPVAVAAAGPAAGGAAAEAAEEQSEFDVVLESAGEKKIGVIKVVREIVSGLGLKEAKDLVDSAPKPLLEKVNKEAAEDAKGKLEAAGATVTVK.

This sequence belongs to the bacterial ribosomal protein bL12 family. In terms of assembly, homodimer. Part of the ribosomal stalk of the 50S ribosomal subunit. Forms a multimeric L10(L12)X complex, where L10 forms an elongated spine to which 2 to 4 L12 dimers bind in a sequential fashion. Binds GTP-bound translation factors.

In terms of biological role, forms part of the ribosomal stalk which helps the ribosome interact with GTP-bound translation factors. Is thus essential for accurate translation. The chain is Large ribosomal subunit protein bL12 from Mycolicibacterium vanbaalenii (strain DSM 7251 / JCM 13017 / BCRC 16820 / KCTC 9966 / NRRL B-24157 / PYR-1) (Mycobacterium vanbaalenii).